Reading from the N-terminus, the 1308-residue chain is Spermatogenesis-associated protein 31F1B (1308 aa).

A helical transmembrane segment spans residues 7–27 (FLWDTECPLYVYFCFFIIVLI). Disordered regions lie at residues 464-488 (SPPI…LDEP), 627-648 (SQPG…AGKG), 844-863 (HGAQ…QPLL), 902-927 (PTAT…LLQG), 1005-1026 (FSTE…VAGK), 1084-1190 (GACP…AGLK), and 1204-1254 (MKSK…PKAQ). Positions 465–478 (PPIPLPEAAPPPSS) are enriched in pro residues. A compositionally biased stretch (acidic residues) spans 1107 to 1117 (METDSEQDMED).

It belongs to the SPATA31 family.

It localises to the membrane. The chain is Spermatogenesis-associated protein 31F1B from Mus musculus (Mouse).